The sequence spans 1969 residues: Hybrid signal transduction histidine kinase B (1969 aa).

Residues 1–10 are compositionally biased toward polar residues; it reads MEKSEQTNSF. Disordered stretches follow at residues 1–91, 218–335, 412–436, 468–505, and 551–598; these read MEKS…HETK, KINE…KTKQ, QQQQ…SSDK, NNIN…KNKL, and GSGG…YNNN. The segment covering 11–55 has biased composition (low complexity); that stretch reads ESSNNNNNNIDSNINNNLENNNNKNNNNNNNNNNNNNNNNNNIEN. The segment covering 56 to 65 has biased composition (basic and acidic residues); that stretch reads SIDKNNKEDN. Residues 72 to 86 are compositionally biased toward basic residues; it reads SHRKHRTRLKSKKGN. The span at 242-252 shows a compositional bias: polar residues; it reads TNSSILKSSEQ. Over residues 280-292 the composition is skewed to low complexity; the sequence is SSSSDEGSDNSKS. Positions 293-304 are enriched in polar residues; that stretch reads QHSSVNTPTLSR. Residues 313–335 are compositionally biased toward low complexity; that stretch reads SQQSQKQSQQQSQQPQQQNKTKQ. A compositionally biased stretch (basic residues) spans 416 to 425; that stretch reads QHHRHYHHHI. Over residues 469–492 the composition is skewed to polar residues; it reads NINIQAPSTPVQSRNYPLFTTQSP. A compositionally biased stretch (gly residues) spans 551–571; that stretch reads GSGGGGSGGGGGGGGGGGGIG. Residues 574–598 are compositionally biased toward low complexity; the sequence is SSFLDDNNNLNNGENFKNSNSYNNN. A run of 5 helical transmembrane segments spans residues 660–680, 684–704, 708–728, 747–767, and 795–815; these read AYIL…STIL, EWFI…LGKI, MYLI…TSII, LVMI…VILI, and FGEL…YTIL. Positions 967-1188 constitute a Histidine kinase domain; it reads TVSHELRTPI…TFSFTIPCGI (222 aa). A Phosphohistidine; by autocatalysis modification is found at His970. Disordered stretches follow at residues 1359-1415, 1521-1563, 1617-1709, and 1755-1832; these read ASKD…HQLI, GIAL…TTQS, NNNF…SSHS, and QKPQ…TAAA. A compositionally biased stretch (gly residues) spans 1373–1398; it reads GDGGRSLSGGGGGVGSNGNGNGGGGL. Composition is skewed to low complexity over residues 1399–1410 and 1527–1549; these read DSNISPSELSSS and SSSK…SPNS. Composition is skewed to polar residues over residues 1554 to 1563 and 1626 to 1665; these read ELGNGKTTQS and KPST…SPHR. 2 stretches are compositionally biased toward low complexity: residues 1755-1774 and 1781-1821; these read QKPQ…TSTQ and KTTT…TTTT. The region spanning 1840–1967 is the Response regulatory domain; sequence KILLVEDNFV…DILIQMIKKH (128 aa). Asp1889 is subject to 4-aspartylphosphate.

It is found in the membrane. The catalysed reaction is ATP + protein L-histidine = ADP + protein N-phospho-L-histidine.. Its function is as follows. Acts in the cytokinin signal transduction pathway that regulates spore germination. Required for the maintenance of spore dormancy. Does not appear to act as a cytokinin receptor. Probably undergoes ATP-dependent autophosphorylation at a conserved histidine residue in the kinase core, which is followed by transfer of the phosphoryl group to a conserved aspartate residue in the receiver domain. This Dictyostelium discoideum (Social amoeba) protein is Hybrid signal transduction histidine kinase B (dhkB).